The primary structure comprises 1073 residues: Carbamoyl phosphate synthase large chain (1073 aa).

Residues 1–399 are carboxyphosphate synthetic domain; sequence MPKREDIKKV…SLLKAFKSLD (399 aa). ATP contacts are provided by Arg-129, Arg-169, Gly-175, Gly-176, Glu-208, Val-210, Glu-215, Gly-241, Val-242, His-243, Gln-284, and Glu-296. The region spanning 133–325 is the ATP-grasp 1 domain; sequence KETMLSIGEK…IARVTAKIAI (193 aa). Gln-284, Glu-296, and Asn-298 together coordinate Mg(2+). The Mn(2+) site is built by Gln-284, Glu-296, and Asn-298. Residues 400–540 form an oligomerization domain region; it reads IDNQLGIKRW…YSTYEDTCET (141 aa). The carbamoyl phosphate synthetic domain stretch occupies residues 541–931; sequence NSTDKKKILI…YKAELAADNL (391 aa). Residues 672-863 enclose the ATP-grasp 2 domain; it reads YLLMQELGIP…LAKIAAKVIA (192 aa). ATP is bound by residues Arg-708, Asp-747, Leu-749, Glu-754, Gly-779, Val-780, His-781, Ser-782, Gln-822, and Glu-834. Mg(2+)-binding residues include Gln-822, Glu-834, and Asn-836. 3 residues coordinate Mn(2+): Gln-822, Glu-834, and Asn-836. The MGS-like domain occupies 930-1071; the sequence is NLLPLTGKVF…NEYHKEMEQK (142 aa). An allosteric domain region spans residues 932-1073; that stretch reads LPLTGKVFLS…YHKEMEQKEE (142 aa).

This sequence belongs to the CarB family. In terms of assembly, composed of two chains; the small (or glutamine) chain promotes the hydrolysis of glutamine to ammonia, which is used by the large (or ammonia) chain to synthesize carbamoyl phosphate. Tetramer of heterodimers (alpha,beta)4. Mg(2+) is required as a cofactor. It depends on Mn(2+) as a cofactor.

It carries out the reaction hydrogencarbonate + L-glutamine + 2 ATP + H2O = carbamoyl phosphate + L-glutamate + 2 ADP + phosphate + 2 H(+). It catalyses the reaction hydrogencarbonate + NH4(+) + 2 ATP = carbamoyl phosphate + 2 ADP + phosphate + 2 H(+). Its pathway is amino-acid biosynthesis; L-arginine biosynthesis; carbamoyl phosphate from bicarbonate: step 1/1. It functions in the pathway pyrimidine metabolism; UMP biosynthesis via de novo pathway; (S)-dihydroorotate from bicarbonate: step 1/3. In terms of biological role, large subunit of the glutamine-dependent carbamoyl phosphate synthetase (CPSase). CPSase catalyzes the formation of carbamoyl phosphate from the ammonia moiety of glutamine, carbonate, and phosphate donated by ATP, constituting the first step of 2 biosynthetic pathways, one leading to arginine and/or urea and the other to pyrimidine nucleotides. The large subunit (synthetase) binds the substrates ammonia (free or transferred from glutamine from the small subunit), hydrogencarbonate and ATP and carries out an ATP-coupled ligase reaction, activating hydrogencarbonate by forming carboxy phosphate which reacts with ammonia to form carbamoyl phosphate. The protein is Carbamoyl phosphate synthase large chain of Methanosarcina mazei (strain ATCC BAA-159 / DSM 3647 / Goe1 / Go1 / JCM 11833 / OCM 88) (Methanosarcina frisia).